The sequence spans 1406 residues: Receptor-type tyrosine-protein phosphatase eta (1406 aa).

The signal sequence occupies residues Met1–Cys24. The Extracellular portion of the chain corresponds to Thr25–Gly1044. 36 N-linked (GlcNAc...) asparagine glycosylation sites follow: Asn36, Asn52, Asn97, Asn103, Asn118, Asn124, Asn186, Asn192, Asn243, Asn275, Asn281, Asn296, Asn302, Asn331, Asn332, Asn364, Asn385, Asn391, Asn453, Asn459, Asn484, Asn500, Asn510, Asn547, Asn568, Asn630, Asn636, Asn651, Asn657, Asn719, Asn745, Asn750, Asn766, Asn776, Asn804, and Asn828. Residues Glu39–Ser72 are disordered. The segment covering Met41–Arg58 has biased composition (polar residues). Fibronectin type-III domains lie at Ala82–Ser170, Pro171–Ser259, Pro260–Leu343, Lys346–Ser437, Pro438–Thr523, Lys524–Arg614, Ala615–Ser703, Met704–Ser793, Val794–Pro888, and Pro887–Val979. A glycan (N-linked (GlcNAc...) asparagine) is linked at Asn1010. The chain crosses the membrane as a helical span at residues Ala1045 to Trp1065. The Cytoplasmic segment spans residues Arg1066–Ala1406. In terms of domain architecture, Tyrosine-protein phosphatase spans Phe1110 to Ile1367. Residues Asp1274, Cys1308–Arg1314, and Gln1352 each bind substrate. The active-site Phosphocysteine intermediate is Cys1308.

The protein belongs to the protein-tyrosine phosphatase family. Receptor class 3 subfamily. In terms of tissue distribution, found on the apical surfaces of retinal Mueller cells, renal tubule cells and intestinal brush border cells.

It localises to the cell membrane. Its subcellular location is the cell projection. It is found in the ruffle membrane. The protein localises to the cell junction. It catalyses the reaction O-phospho-L-tyrosyl-[protein] + H2O = L-tyrosyl-[protein] + phosphate. Tyrosine phosphatase which dephosphorylates or contributes to the dephosphorylation of several substrates. Plays a role in cell adhesion, migration, proliferation and differentiation. Has a role in megakaryocytes and platelet formation. May influence the potential of nonsensory supporting cells to either proliferate or differentiate into hair cells. This chain is Receptor-type tyrosine-protein phosphatase eta (PTPRJ), found in Gallus gallus (Chicken).